A 475-amino-acid chain; its full sequence is Aspartyl/glutamyl-tRNA(Asn/Gln) amidotransferase subunit B (475 aa).

It belongs to the GatB/GatE family. GatB subfamily. As to quaternary structure, heterotrimer of A, B and C subunits.

It catalyses the reaction L-glutamyl-tRNA(Gln) + L-glutamine + ATP + H2O = L-glutaminyl-tRNA(Gln) + L-glutamate + ADP + phosphate + H(+). The enzyme catalyses L-aspartyl-tRNA(Asn) + L-glutamine + ATP + H2O = L-asparaginyl-tRNA(Asn) + L-glutamate + ADP + phosphate + 2 H(+). Functionally, allows the formation of correctly charged Asn-tRNA(Asn) or Gln-tRNA(Gln) through the transamidation of misacylated Asp-tRNA(Asn) or Glu-tRNA(Gln) in organisms which lack either or both of asparaginyl-tRNA or glutaminyl-tRNA synthetases. The reaction takes place in the presence of glutamine and ATP through an activated phospho-Asp-tRNA(Asn) or phospho-Glu-tRNA(Gln). This is Aspartyl/glutamyl-tRNA(Asn/Gln) amidotransferase subunit B from Lysinibacillus sphaericus (strain C3-41).